The following is a 391-amino-acid chain: Succinate--CoA ligase [ADP-forming] subunit beta (391 aa).

One can recognise an ATP-grasp domain in the interval 9 to 246 (KHLFTEAGIA…LTQEDETEVR (238 aa)). Residues Lys-46, 53–55 (GRG), Glu-99, Leu-102, and Glu-107 contribute to the ATP site. The Mg(2+) site is built by Asn-199 and Asp-213. Substrate-binding positions include Asn-266 and 323 to 325 (GIV).

Belongs to the succinate/malate CoA ligase beta subunit family. Heterotetramer of two alpha and two beta subunits. The cofactor is Mg(2+).

The enzyme catalyses succinate + ATP + CoA = succinyl-CoA + ADP + phosphate. It catalyses the reaction GTP + succinate + CoA = succinyl-CoA + GDP + phosphate. Its pathway is carbohydrate metabolism; tricarboxylic acid cycle; succinate from succinyl-CoA (ligase route): step 1/1. Succinyl-CoA synthetase functions in the citric acid cycle (TCA), coupling the hydrolysis of succinyl-CoA to the synthesis of either ATP or GTP and thus represents the only step of substrate-level phosphorylation in the TCA. The beta subunit provides nucleotide specificity of the enzyme and binds the substrate succinate, while the binding sites for coenzyme A and phosphate are found in the alpha subunit. This is Succinate--CoA ligase [ADP-forming] subunit beta from Halorhodospira halophila (strain DSM 244 / SL1) (Ectothiorhodospira halophila (strain DSM 244 / SL1)).